A 244-amino-acid chain; its full sequence is DNA repair protein RecO (244 aa).

This sequence belongs to the RecO family.

Its function is as follows. Involved in DNA repair and RecF pathway recombination. The sequence is that of DNA repair protein RecO from Myxococcus xanthus (strain DK1622).